Here is a 380-residue protein sequence, read N- to C-terminus: 1-deoxy-D-xylulose 5-phosphate reductoisomerase (380 aa).

Positions 10, 11, 12, 13, 36, 37, 38, and 120 each coordinate NADPH. Lysine 121 lines the 1-deoxy-D-xylulose 5-phosphate pocket. NADPH is bound at residue glutamate 122. Mn(2+) is bound at residue aspartate 146. Serine 147, glutamate 148, serine 172, and histidine 195 together coordinate 1-deoxy-D-xylulose 5-phosphate. Mn(2+) is bound at residue glutamate 148. NADPH is bound at residue glycine 201. The 1-deoxy-D-xylulose 5-phosphate site is built by serine 208, asparagine 213, lysine 214, and glutamate 217. Glutamate 217 serves as a coordination point for Mn(2+).

This sequence belongs to the DXR family. Mg(2+) is required as a cofactor. Mn(2+) serves as cofactor.

The catalysed reaction is 2-C-methyl-D-erythritol 4-phosphate + NADP(+) = 1-deoxy-D-xylulose 5-phosphate + NADPH + H(+). It participates in isoprenoid biosynthesis; isopentenyl diphosphate biosynthesis via DXP pathway; isopentenyl diphosphate from 1-deoxy-D-xylulose 5-phosphate: step 1/6. Catalyzes the NADPH-dependent rearrangement and reduction of 1-deoxy-D-xylulose-5-phosphate (DXP) to 2-C-methyl-D-erythritol 4-phosphate (MEP). This chain is 1-deoxy-D-xylulose 5-phosphate reductoisomerase, found in Listeria monocytogenes serovar 1/2a (strain ATCC BAA-679 / EGD-e).